A 245-amino-acid polypeptide reads, in one-letter code: Eukaryotic translation initiation factor 6 (245 aa).

The protein belongs to the eIF-6 family. As to quaternary structure, monomer. Associates with the 60S ribosomal subunit.

Its subcellular location is the cytoplasm. The protein resides in the nucleus. The protein localises to the nucleolus. Its function is as follows. Binds to the 60S ribosomal subunit and prevents its association with the 40S ribosomal subunit to form the 80S initiation complex in the cytoplasm. May also be involved in ribosome biogenesis. The chain is Eukaryotic translation initiation factor 6 from Ostreococcus lucimarinus (strain CCE9901).